A 427-amino-acid polypeptide reads, in one-letter code: MEILSLHQWKQQQDTKSSTIRNKQVDQDVLRIIEQVQIQGDEALKHYTLQFDQVNLNSFEVTSNEWEQAIKKVDSTLLDALETAAGNIQRYQSEMLESNWSITPETGVKLGQQVNPLDRVGIYIPGGKASYPSTVLMDAIPAKVAGVKEIIITSPPNKNGEIDPVVLAAAKIAGVTKVYKVGGAQAIAALTYGTETIPSVDKIVGPGNIYVTRAKKWVFGDIAIDMIAGPSEICIFADSSAPVPYVAADLLSQAEHDEEASSLCITTDRSFAKLLQEEVNRQIPLLERKEIIEASISQNGKIIICDNNEEAINTINQLAPEHLQLMTIDSEQLCPKIKHAGAIFIGNYSSEPLGDYFAGPSHTLPTNGTAKFSSPLGVYDFVKKTSLIQYSKNKLAEAADTIITLAEAEGLTAHANAIRIRKENDNA.

Tyrosine 123, glutamine 185, and asparagine 208 together coordinate NAD(+). Substrate contacts are provided by serine 231, glutamine 253, and histidine 256. 2 residues coordinate Zn(2+): glutamine 253 and histidine 256. Active-site proton acceptor residues include glutamate 321 and histidine 322. Positions 322, 355, 409, and 414 each coordinate substrate. A Zn(2+)-binding site is contributed by aspartate 355. Histidine 414 serves as a coordination point for Zn(2+).

Belongs to the histidinol dehydrogenase family. It depends on Zn(2+) as a cofactor.

It carries out the reaction L-histidinol + 2 NAD(+) + H2O = L-histidine + 2 NADH + 3 H(+). It participates in amino-acid biosynthesis; L-histidine biosynthesis; L-histidine from 5-phospho-alpha-D-ribose 1-diphosphate: step 9/9. In terms of biological role, catalyzes the sequential NAD-dependent oxidations of L-histidinol to L-histidinaldehyde and then to L-histidine. The sequence is that of Histidinol dehydrogenase from Oceanobacillus iheyensis (strain DSM 14371 / CIP 107618 / JCM 11309 / KCTC 3954 / HTE831).